Here is a 208-residue protein sequence, read N- to C-terminus: Small ribosomal subunit protein uS4 (208 aa).

The S4 RNA-binding domain maps to 98 to 159 (RRLDNVAYRL…KSRKVAAISE (62 aa)).

The protein belongs to the universal ribosomal protein uS4 family. Part of the 30S ribosomal subunit. Contacts protein S5. The interaction surface between S4 and S5 is involved in control of translational fidelity.

One of the primary rRNA binding proteins, it binds directly to 16S rRNA where it nucleates assembly of the body of the 30S subunit. Its function is as follows. With S5 and S12 plays an important role in translational accuracy. This is Small ribosomal subunit protein uS4 from Geobacter sp. (strain M21).